Here is a 596-residue protein sequence, read N- to C-terminus: Pentatricopeptide repeat-containing protein At5g38730 (596 aa).

12 PPR repeats span residues 132–166 (VSHVFSWLMIYYAKAGMINDSIVVFEQIRSCGLKP), 167–201 (HLQACTVLLNSLVKQRLTDTVWKIFKKMVKLGVVA), 202–236 (NIHVYNVLVHACSKSGDPEKAEKLLSEMEEKGVFP), 237–271 (DIFTYNTLISVYCKKSMHFEALSVQDRMERSGVAP), 272–302 (NIVTYNSFIHGFSREGRMREATRLFREIKDD), 306–340 (NHVTYTTLIDGYCRMNDIDEALRLREVMESRGFSP), 341–375 (GVVTYNSILRKLCEDGRIREANRLLTEMSGKKIEP), 376–410 (DNITCNTLINAYCKIEDMVSAVKVKKKMIESGLKL), 411–445 (DMYSYKALIHGFCKVLELENAKEELFSMIEKGFSP), 446–480 (GYATYSWLVDGFYNQNKQDEITKLLEEFEKRGLCA), 481–515 (DVALYRGLIRRICKLEQVDYAKVLFESMEKKGLVG), and 516–550 (DSVIFTTMAYAYWRTGKVTEASALFDVMYNRRLMV).

This sequence belongs to the PPR family. P subfamily.

This is Pentatricopeptide repeat-containing protein At5g38730 from Arabidopsis thaliana (Mouse-ear cress).